The sequence spans 139 residues: MSKKIIYFLCTGNSCRSQMAEGFGKHYLSDEWEVYSAGMEAHGLNPNAVKAMNEVGIDISDQTSDLIHIDLLNNADFVVTLCGDAADKCPLTPAHVKREHWGFDDPAKAEGTKEERWMVFQRVRDEIGARIKKFAETGE.

Active-site nucleophile residues include Cys-10, Cys-82, and Cys-89. Disulfide bonds link Cys-10-Cys-82 and Cys-82-Cys-89.

This sequence belongs to the low molecular weight phosphotyrosine protein phosphatase family. Thioredoxin-coupled ArsC subfamily.

The protein localises to the cytoplasm. The enzyme catalyses arsenate + [thioredoxin]-dithiol + H(+) = arsenite + [thioredoxin]-disulfide + H2O. Catalyzes the reduction of arsenate [As(V)] to arsenite [As(III)]. This Shouchella clausii (strain KSM-K16) (Alkalihalobacillus clausii) protein is Arsenate reductase.